The primary structure comprises 282 residues: MPHAPAKRQKREEYKNALHEDESNAALPKKKFYRQRAHANPFSDHSLTYPKSPADMDWASLYPAYAVVKREQKSAGEEESTPLDEEEQRRLKAITKNVEIADIGCGFGGLLFALAPKFPDTLMLEYVQEKVRALRLQNASIQLYQNASCLRANTMKFLPNFFSKAQLSKIFLCFPDPHFKQRKHKARIVSYTLNSEYAYVLRPGGVVYTITDVKDLHEWMVGHFEKHPSFERCEKEFEEEGEAMDEGVGIMRTETEEGKKVSRNGGMKYVACFRRVEDPEWP.

Residues 1 to 29 (MPHAPAKRQKREEYKNALHEDESNAALPK) are disordered. Residues 10 to 22 (KREEYKNALHEDE) are compositionally biased toward basic and acidic residues. S-adenosyl-L-methionine is bound by residues glycine 104, 153-154 (NT), and cysteine 173. The active site involves aspartate 176. 255-257 (TEE) contacts S-adenosyl-L-methionine.

The protein belongs to the class I-like SAM-binding methyltransferase superfamily. TrmB family. In terms of assembly, forms a complex with TRM82.

It is found in the nucleus. The enzyme catalyses guanosine(46) in tRNA + S-adenosyl-L-methionine = N(7)-methylguanosine(46) in tRNA + S-adenosyl-L-homocysteine. It functions in the pathway tRNA modification; N(7)-methylguanine-tRNA biosynthesis. Catalyzes the formation of N(7)-methylguanine at position 46 (m7G46) in tRNA. The protein is tRNA (guanine-N(7)-)-methyltransferase of Phaeosphaeria nodorum (strain SN15 / ATCC MYA-4574 / FGSC 10173) (Glume blotch fungus).